The sequence spans 219 residues: Trafficking protein particle complex subunit 4 (219 aa).

It belongs to the TRAPP small subunits family. TRAPPC4 subfamily. Component of the multisubunit TRAPP (transport protein particle) complex, which includes at least TRAPPC2, TRAPPC2L, TRAPPC3, TRAPPC3L, TRAPPC4, TRAPPC5, TRAPPC8, TRAPPC9, TRAPPC10, TRAPPC11 and TRAPPC12. Interacts with SDC2.

It is found in the postsynaptic cell membrane. The protein resides in the golgi apparatus membrane. Its subcellular location is the endoplasmic reticulum. It localises to the vesicle. Core component of the TRAPP complexes which has a function of guanine nucleotide exchange factor activity for Rab1 GTPase. Plays a role in vesicular transport from endoplasmic reticulum to Golgi and autophagy. May play a role in dendrite postsynaptic membrane trafficking. In Bos taurus (Bovine), this protein is Trafficking protein particle complex subunit 4 (TRAPPC4).